Here is a 151-residue protein sequence, read N- to C-terminus: Small ribosomal subunit protein uS15 (151 aa).

The disordered stretch occupies residues 1–20 (MGRMHSNGKGISGSSLPYNR).

This sequence belongs to the universal ribosomal protein uS15 family. Component of the small ribosomal subunit. Part of the small subunit (SSU) processome, composed of more than 70 proteins and the RNA chaperone small nucleolar RNA (snoRNA) U3.

Its subcellular location is the cytoplasm. The protein localises to the nucleus. It localises to the nucleolus. Functionally, component of the small ribosomal subunit. The ribosome is a large ribonucleoprotein complex responsible for the synthesis of proteins in the cell. Part of the small subunit (SSU) processome, first precursor of the small eukaryotic ribosomal subunit. During the assembly of the SSU processome in the nucleolus, many ribosome biogenesis factors, an RNA chaperone and ribosomal proteins associate with the nascent pre-rRNA and work in concert to generate RNA folding, modifications, rearrangements and cleavage as well as targeted degradation of pre-ribosomal RNA by the RNA exosome. In Dictyostelium discoideum (Social amoeba), this protein is Small ribosomal subunit protein uS15 (rps13).